We begin with the raw amino-acid sequence, 580 residues long: Type II methyltransferase M.BanIII (580 aa).

Belongs to the N(4)/N(6)-methyltransferase family.

The enzyme catalyses a 2'-deoxyadenosine in DNA + S-adenosyl-L-methionine = an N(6)-methyl-2'-deoxyadenosine in DNA + S-adenosyl-L-homocysteine + H(+). A gamma subtype methylase, recognizes the double-stranded sequence 5'-ATCGAT-3', methylates A-5 on both strands, and protects the DNA from cleavage by the BanIII endonuclease. The chain is Type II methyltransferase M.BanIII (banIIIM) from Aneurinibacillus aneurinilyticus (Bacillus aneurinolyticus).